The chain runs to 500 residues: Probable cytosol aminopeptidase (500 aa).

Residues Lys265 and Asp270 each coordinate Mn(2+). The active site involves Lys277. Asp288, Asp347, and Glu349 together coordinate Mn(2+). Arg351 is a catalytic residue.

Belongs to the peptidase M17 family. Mn(2+) is required as a cofactor.

The protein localises to the cytoplasm. It catalyses the reaction Release of an N-terminal amino acid, Xaa-|-Yaa-, in which Xaa is preferably Leu, but may be other amino acids including Pro although not Arg or Lys, and Yaa may be Pro. Amino acid amides and methyl esters are also readily hydrolyzed, but rates on arylamides are exceedingly low.. The catalysed reaction is Release of an N-terminal amino acid, preferentially leucine, but not glutamic or aspartic acids.. Presumably involved in the processing and regular turnover of intracellular proteins. Catalyzes the removal of unsubstituted N-terminal amino acids from various peptides. This is Probable cytosol aminopeptidase from Corynebacterium glutamicum (strain ATCC 13032 / DSM 20300 / JCM 1318 / BCRC 11384 / CCUG 27702 / LMG 3730 / NBRC 12168 / NCIMB 10025 / NRRL B-2784 / 534).